We begin with the raw amino-acid sequence, 241 residues long: Uridylate kinase (241 aa).

12 to 15 provides a ligand contact to ATP; that stretch reads KISG. An involved in allosteric activation by GTP region spans residues 20-25; that stretch reads GEKGTG. Residue glycine 54 participates in UMP binding. ATP is bound by residues glycine 55 and arginine 59. UMP-binding positions include aspartate 74 and 135–142; that span reads TGNPYFST. ATP is bound by residues asparagine 163, tyrosine 169, and aspartate 172.

Belongs to the UMP kinase family. As to quaternary structure, homohexamer.

It is found in the cytoplasm. It catalyses the reaction UMP + ATP = UDP + ADP. It functions in the pathway pyrimidine metabolism; CTP biosynthesis via de novo pathway; UDP from UMP (UMPK route): step 1/1. With respect to regulation, allosterically activated by GTP. Inhibited by UTP. In terms of biological role, catalyzes the reversible phosphorylation of UMP to UDP. The sequence is that of Uridylate kinase from Lactobacillus delbrueckii subsp. bulgaricus (strain ATCC 11842 / DSM 20081 / BCRC 10696 / JCM 1002 / NBRC 13953 / NCIMB 11778 / NCTC 12712 / WDCM 00102 / Lb 14).